Consider the following 321-residue polypeptide: Histidine N-alpha-methyltransferase (321 aa).

Position 56 (tyrosine 56) interacts with L-histidine. Residues glycine 86, lysine 92, aspartate 113, and aspartate 141–phenylalanine 142 contribute to the S-adenosyl-L-methionine site. Residues asparagine 166, tyrosine 206, and glutamate 282–serine 284 contribute to the L-histidine site.

Belongs to the methyltransferase superfamily. EgtD family. Monomer.

It carries out the reaction L-histidine + 3 S-adenosyl-L-methionine = hercynine + 3 S-adenosyl-L-homocysteine + 3 H(+). Its pathway is amino-acid biosynthesis; ergothioneine biosynthesis. Its function is as follows. Catalyzes the SAM-dependent triple methylation of the alpha-amino group of histidine to form hercynine, a step in the biosynthesis pathway of ergothioneine (ERG). ERG is one of the major redox buffers which protects bacteria against redox stressors and antibiotics; loss of ERG or mycothiol (MSH, the other major redox buffer in this bacteria) leads to respiratory alterations and bioenergetic deficiencies that negatively impact virulence. This Mycobacterium tuberculosis (strain CDC 1551 / Oshkosh) protein is Histidine N-alpha-methyltransferase (egtD).